The chain runs to 1048 residues: Probable inactive receptor kinase At5g10020 (1048 aa).

An N-terminal signal peptide occupies residues 1–21; the sequence is MSHFLTFCFLSLLLLLHGANA. 18 LRR repeats span residues 100-120, 124-146, 148-169, 172-194, 196-217, 224-246, 250-272, 273-294, 298-319, 320-342, 365-387, 389-411, 412-433, 436-457, 469-491, 493-516, 517-539, and 540-560; these read RLRN…PSLG, SLQH…ISEL, SLNH…GFRN, QLRS…FTEL, NVEF…PMEN, TLRH…ESIG, NLEI…GSQP, SLRI…ELLQ, PLLE…INSS, TLTM…FKSC, TPDV…TSAF, RLSV…WGDS, QFSV…SFFT, SLRS…RGSR, QMEL…IGTM, KIKV…NKLS, GLLF…LPSQ, and MVGF…DLRS. Residues 602 to 622 traverse the membrane as a helical segment; sequence IAIIVASVGAAIMILFVLFAY. Residues 696 to 733 are disordered; that stretch reads EQGAPATSAPTNLLDDYPAASGRKSSSGGSPLSSSPRF. Over residues 716–733 the composition is skewed to low complexity; sequence SGRKSSSGGSPLSSSPRF. S744 is modified (phosphoserine). Residues 768 to 1045 form the Protein kinase domain; that stretch reads RAPAEVLGRS…IRQVLDHLTS (278 aa). Residues 774 to 782 and K796 each bind ATP; that span reads LGRSSHGTL.

The protein belongs to the protein kinase superfamily.

It localises to the membrane. The polypeptide is Probable inactive receptor kinase At5g10020 (Arabidopsis thaliana (Mouse-ear cress)).